The primary structure comprises 326 residues: MAVYTDITEDELIRFLAAYEVGSLTSYKGIAEGVENSNFLLHTTKGAYILTLYEKRVNADDLPFFLGLMHHLAERGLSCPLPLPRADGKLLGTLSGRPAAVISFLEGMWLRKPEAQHCREVGRALASMHQAGEGFPLKRPNALSVEGWRPLWRNSEARADEVQAGLKDEIATELAFIEEHWPKDLPEGVIHADLFPDNVFFLGDRLSGLIDFYFACNDFLAYDVAICLNSWCFEKDGSYNITKGMALLSGYESVRRLTAEEIEALPLLARGSALRFFLTRLYDWLMTPPGALVVKKDPLEYLTKIRFHRAIVSSAEYGLRREEAPA.

It belongs to the pseudomonas-type ThrB family.

It catalyses the reaction L-homoserine + ATP = O-phospho-L-homoserine + ADP + H(+). Its pathway is amino-acid biosynthesis; L-threonine biosynthesis; L-threonine from L-aspartate: step 4/5. This Rhizobium meliloti (strain 1021) (Ensifer meliloti) protein is Homoserine kinase.